A 703-amino-acid polypeptide reads, in one-letter code: Histone-lysine N-methyltransferase SETDB2 (703 aa).

One can recognise an MBD domain in the interval 178-248; sequence FTKGNPLQLP…DNFSFNNHVR (71 aa). The Pre-SET domain maps to 310-384; it reads KCCNCTDGCL…LCQNRVVQHG (75 aa). Zn(2+) is bound by residues Cys-312, Cys-314, Cys-318, Cys-324, Cys-326, Cys-365, Cys-369, Cys-371, and Cys-376. The SET domain occupies 387–678; that stretch reads LRLQVFKTNT…AGTELTWDYS (292 aa). 397–399 provides a ligand contact to S-adenosyl-L-methionine; that stretch reads KGW. The segment at 492–588 is disordered; the sequence is TFSPRQARSG…SSSVISGGHP (97 aa). The segment covering 511–525 has biased composition (basic residues); it reads RRPKTKTSMLQKRRR. The span at 550–560 shows a compositional bias: polar residues; it reads PEQKSSAGTKI. The span at 571–586 shows a compositional bias: low complexity; it reads SGYVSEESSSSVISGG. S-adenosyl-L-methionine contacts are provided by residues Arg-632 and 635 to 636; that span reads NH. Zn(2+)-binding residues include Cys-638, Cys-691, Cys-693, and Cys-698.

It belongs to the class V-like SAM-binding methyltransferase superfamily.

The protein localises to the nucleus. It localises to the chromosome. The catalysed reaction is N(6),N(6)-dimethyl-L-lysyl(9)-[histone H3] + S-adenosyl-L-methionine = N(6),N(6),N(6)-trimethyl-L-lysyl(9)-[histone H3] + S-adenosyl-L-homocysteine + H(+). Histone methyltransferase involved in left-right axis specification in early development and mitosis. Specifically trimethylates 'Lys-9' of histone H3 (H3K9me3). H3K9me3 is a specific tag for epigenetic transcriptional repression that recruits HP1 (CBX1, CBX3 and/or CBX5) proteins to methylated histones. Contributes to H3K9me3 in both the interspersed repetitive elements and centromere-associated repeats. Plays a role in chromosome condensation and segregation during mitosis. The chain is Histone-lysine N-methyltransferase SETDB2 (setdb2) from Xenopus laevis (African clawed frog).